Here is a 271-residue protein sequence, read N- to C-terminus: Transmembrane protein 150A (271 aa).

At Met-1–Thr-2 the chain is on the cytoplasmic side. The chain crosses the membrane as a helical span at residues Ala-3–Tyr-23. The Extracellular segment spans residues Ala-24–Glu-75. N-linked (GlcNAc...) asparagine glycosylation is found at Asn-37 and Asn-41. A helical membrane pass occupies residues Ser-76–Leu-96. Topologically, residues Arg-97–Ser-108 are cytoplasmic. The chain crosses the membrane as a helical span at residues Trp-109–Gly-129. The Extracellular portion of the chain corresponds to Asn-130–His-140. The helical transmembrane segment at Tyr-141–Leu-161 threads the bilayer. Residues Ser-162–Arg-178 are Cytoplasmic-facing. The chain crosses the membrane as a helical span at residues Ser-179–Glu-199. Topologically, residues Ser-200 to Glu-211 are extracellular. A helical membrane pass occupies residues Trp-212 to Val-232. The Cytoplasmic segment spans residues Ser-233–Ile-271.

Belongs to the DRAM/TMEM150 family. As to quaternary structure, interacts (via C-terminal cytoplasmic tail) with PI4KA.

The protein localises to the cell membrane. Functionally, regulates localization of phosphatidylinositol 4-kinase (PI4K) to the plasma membrane, possibly by reducing the association of TTC7 (TTC7A or TTC7B) with the PI4K complex. Acts as a regulator of phosphatidylinositol 4-phosphate (PtdIns(4)P) synthesis. May also play a role in fasting-induced catabolism. The protein is Transmembrane protein 150A (TMEM150A) of Homo sapiens (Human).